A 250-amino-acid polypeptide reads, in one-letter code: ATP synthase subunit a (250 aa).

Transmembrane regions (helical) follow at residues 27 to 47, 85 to 105, 115 to 135, 141 to 161, 181 to 201, and 223 to 243; these read FTNAALFMFGIVAIIFFFLTF, FFPLVFSLFTFVLVSNVVGLI, LIVTAAMALLVIGTVIVYGFV, FLHLFVPSGVPAFLLPFLVVI, MLAGHIALKVFAFFVVGLASA, and ELLVAMLQAYVFAVLTSIYLN.

Belongs to the ATPase A chain family. In terms of assembly, F-type ATPases have 2 components, CF(1) - the catalytic core - and CF(0) - the membrane proton channel. CF(1) has five subunits: alpha(3), beta(3), gamma(1), delta(1), epsilon(1). CF(0) has three main subunits: a(1), b(2) and c(9-12). The alpha and beta chains form an alternating ring which encloses part of the gamma chain. CF(1) is attached to CF(0) by a central stalk formed by the gamma and epsilon chains, while a peripheral stalk is formed by the delta and b chains.

It is found in the cell inner membrane. Its function is as follows. Key component of the proton channel; it plays a direct role in the translocation of protons across the membrane. The chain is ATP synthase subunit a from Xanthobacter autotrophicus (strain ATCC BAA-1158 / Py2).